Here is a 181-residue protein sequence, read N- to C-terminus: Crossover junction endodeoxyribonuclease RuvC (181 aa).

Residues Asp7, Glu67, and Asp139 contribute to the active site. Positions 7, 67, and 139 each coordinate Mg(2+).

This sequence belongs to the RuvC family. In terms of assembly, homodimer which binds Holliday junction (HJ) DNA. The HJ becomes 2-fold symmetrical on binding to RuvC with unstacked arms; it has a different conformation from HJ DNA in complex with RuvA. In the full resolvosome a probable DNA-RuvA(4)-RuvB(12)-RuvC(2) complex forms which resolves the HJ. Requires Mg(2+) as cofactor.

The protein resides in the cytoplasm. It carries out the reaction Endonucleolytic cleavage at a junction such as a reciprocal single-stranded crossover between two homologous DNA duplexes (Holliday junction).. Its function is as follows. The RuvA-RuvB-RuvC complex processes Holliday junction (HJ) DNA during genetic recombination and DNA repair. Endonuclease that resolves HJ intermediates. Cleaves cruciform DNA by making single-stranded nicks across the HJ at symmetrical positions within the homologous arms, yielding a 5'-phosphate and a 3'-hydroxyl group; requires a central core of homology in the junction. The consensus cleavage sequence is 5'-(A/T)TT(C/G)-3'. Cleavage occurs on the 3'-side of the TT dinucleotide at the point of strand exchange. HJ branch migration catalyzed by RuvA-RuvB allows RuvC to scan DNA until it finds its consensus sequence, where it cleaves and resolves the cruciform DNA. This chain is Crossover junction endodeoxyribonuclease RuvC, found in Cupriavidus metallidurans (strain ATCC 43123 / DSM 2839 / NBRC 102507 / CH34) (Ralstonia metallidurans).